Consider the following 334-residue polypeptide: Probable tRNA pseudouridine synthase B (334 aa).

Residue D82 is the Nucleophile of the active site. In terms of domain architecture, PUA spans 250–325 (LPKVWIRDSA…IAVDVDKVFM (76 aa)).

This sequence belongs to the pseudouridine synthase TruB family. Type 2 subfamily.

It catalyses the reaction uridine(55) in tRNA = pseudouridine(55) in tRNA. In terms of biological role, could be responsible for synthesis of pseudouridine from uracil-55 in the psi GC loop of transfer RNAs. This chain is Probable tRNA pseudouridine synthase B, found in Thermococcus gammatolerans (strain DSM 15229 / JCM 11827 / EJ3).